We begin with the raw amino-acid sequence, 175 residues long: MPLNIEDKKAVVAEVSAQVAKAQTIVVAEYRGIAVGDLTKLRAAARQQGVYLRVLKNTLARRAVEGTPFAGLAEQMTGPLIYGISEDAVASAKVLNDFAKTNDKLVLRAGSYDGKVLDAAAVKALASIPSRDELIAQLLGVMQAPVSGFARLLAALAAKKAEGAAPAEAEAAAEA.

This sequence belongs to the universal ribosomal protein uL10 family. Part of the ribosomal stalk of the 50S ribosomal subunit. The N-terminus interacts with L11 and the large rRNA to form the base of the stalk. The C-terminus forms an elongated spine to which L12 dimers bind in a sequential fashion forming a multimeric L10(L12)X complex.

Forms part of the ribosomal stalk, playing a central role in the interaction of the ribosome with GTP-bound translation factors. The protein is Large ribosomal subunit protein uL10 of Cupriavidus taiwanensis (strain DSM 17343 / BCRC 17206 / CCUG 44338 / CIP 107171 / LMG 19424 / R1) (Ralstonia taiwanensis (strain LMG 19424)).